Reading from the N-terminus, the 88-residue chain is MANTPQAKKRARQNEKARKHNASMRSMGRTYLKKVLSAIQTGDQAAAQAAYVSAVAVIDRIADKGLIHKNKAARHKSRLNAKLKAMAA.

A disordered region spans residues 1–27 (MANTPQAKKRARQNEKARKHNASMRSM). The segment covering 7-22 (AKKRARQNEKARKHNA) has biased composition (basic residues).

Belongs to the bacterial ribosomal protein bS20 family.

Functionally, binds directly to 16S ribosomal RNA. The sequence is that of Small ribosomal subunit protein bS20 from Cellvibrio japonicus (strain Ueda107) (Pseudomonas fluorescens subsp. cellulosa).